Reading from the N-terminus, the 319-residue chain is Alpha-hemolysin (319 aa).

The signal sequence occupies residues 1–26 (MKTRIVSSVTTTLLLGSILMNPVANA).

Belongs to the aerolysin family. As to quaternary structure, self-assembles to form first a non-lytic oligomeric intermediate and then, a mushroom-shaped homoheptamer structure of 100 Angstroms in length and up to 100 Angstroms in diameter.

The protein localises to the secreted. In terms of biological role, alpha-toxin binds to the membrane of eukaryotic cells resulting in the release of low-molecular weight molecules and leading to an eventual osmotic lysis. Inhibits host neutrophil chemotaxis to the lesion region. Heptamer oligomerization and pore formation is required for lytic activity. The chain is Alpha-hemolysin (hly) from Staphylococcus aureus (strain NCTC 8325 / PS 47).